Here is a 277-residue protein sequence, read N- to C-terminus: Shikimate dehydrogenase (NADP(+)) (277 aa).

Shikimate contacts are provided by residues S20–S22 and T67. K71 acts as the Proton acceptor in catalysis. D83 is an NADP(+) binding site. Shikimate is bound by residues N92 and D107. NADP(+)-binding positions include G131–V135 and I219. Y221 contacts shikimate. G242 contacts NADP(+).

This sequence belongs to the shikimate dehydrogenase family. In terms of assembly, homodimer.

It catalyses the reaction shikimate + NADP(+) = 3-dehydroshikimate + NADPH + H(+). The protein operates within metabolic intermediate biosynthesis; chorismate biosynthesis; chorismate from D-erythrose 4-phosphate and phosphoenolpyruvate: step 4/7. In terms of biological role, involved in the biosynthesis of the chorismate, which leads to the biosynthesis of aromatic amino acids. Catalyzes the reversible NADPH linked reduction of 3-dehydroshikimate (DHSA) to yield shikimate (SA). The protein is Shikimate dehydrogenase (NADP(+)) of Pelobacter propionicus (strain DSM 2379 / NBRC 103807 / OttBd1).